A 518-amino-acid polypeptide reads, in one-letter code: MGNRTSRHHRAAPEQPPPQPKPKPQPQQQQQQWPRPQQPTPPPAAAPDAAMGRVLGRPMEDVRATYTFGRELGRGQFGVTYLVTHKATGKRFACKSIATRKLAHRDDIEDVRREVQIMHHLTGHRNIVELRGAYEDRHSVNLIMELCEGGELFDRIIARGHYSERAAAALCREIVAVVHSCHSMGVFHRDLKPENFLFLSKSEDSPLKATDFGLSVFFKPGEHFKDLVGSAYYVAPEVLKRNYGAEADIWSAGVILYILLSGVPPFWAESEDGIFDAVLRGHIDFSSEPWPSISNGAKDLVKKMLRQDPKERLTSAEILNHPWIREDGEAPDKPLDITVISRMKQFRAMNKLKKVALKVVAENLSDEEITGLKEMFRSLDTDNSGTITLEELRSGLPKLGTKISESEIRQLMEAADVDGNGTIDYAEFISATMHMNRLEKEDHILKAFEYFDKDHSGYITVDELEEALKKYDMGDDKTIKEIIAEVDTDHDGRINYQEFVAMMRNNNPEIAPNRRRMF.

The span at 1 to 10 (MGNRTSRHHR) shows a compositional bias: basic residues. Positions 1 to 49 (MGNRTSRHHRAAPEQPPPQPKPKPQPQQQQQQWPRPQQPTPPPAAAPDA) are disordered. Glycine 2 carries the N-myristoyl glycine lipid modification. The segment covering 14 to 25 (EQPPPQPKPKPQ) has biased composition (pro residues). The span at 26-35 (PQQQQQQWPR) shows a compositional bias: low complexity. The segment covering 36–45 (PQQPTPPPAA) has biased composition (pro residues). A Protein kinase domain is found at 66–324 (YTFGRELGRG…SAEILNHPWI (259 aa)). ATP contacts are provided by residues 72-80 (LGRGQFGVT) and lysine 95. The active-site Proton acceptor is aspartate 190. An autoinhibitory domain region spans residues 330–360 (APDKPLDITVISRMKQFRAMNKLKKVALKVV). EF-hand domains are found at residues 367–402 (EEIT…LGTK), 403–438 (ISES…MNRL), 439–474 (EKED…YDMG), and 475–509 (DDKT…NNPE). Residues aspartate 380, aspartate 382, serine 384, threonine 386, glutamate 391, aspartate 416, aspartate 418, asparagine 420, threonine 422, glutamate 427, aspartate 452, aspartate 454, serine 456, tyrosine 458, glutamate 463, aspartate 487, aspartate 489, aspartate 491, arginine 493, and glutamate 498 each coordinate Ca(2+).

Belongs to the protein kinase superfamily. Ser/Thr protein kinase family. CDPK subfamily. As to expression, expressed in roots and leaf blades.

The protein resides in the membrane. It carries out the reaction L-seryl-[protein] + ATP = O-phospho-L-seryl-[protein] + ADP + H(+). It catalyses the reaction L-threonyl-[protein] + ATP = O-phospho-L-threonyl-[protein] + ADP + H(+). Activated by calcium. Autophosphorylation may play an important role in the regulation of the kinase activity. May play a role in signal transduction pathways that involve calcium as a second messenger. The chain is Calcium-dependent protein kinase 1 from Oryza sativa subsp. japonica (Rice).